The chain runs to 294 residues: Cytidine deaminase (294 aa).

CMP/dCMP-type deaminase domains lie at 48–168 (DEDA…FGPK) and 186–294 (LTGD…VLLA). Residue 89–91 (NME) coordinates substrate. His-102 is a Zn(2+) binding site. The Proton donor role is filled by Glu-104. 2 residues coordinate Zn(2+): Cys-129 and Cys-132.

This sequence belongs to the cytidine and deoxycytidylate deaminase family. Homodimer. Zn(2+) serves as cofactor.

It catalyses the reaction cytidine + H2O + H(+) = uridine + NH4(+). The enzyme catalyses 2'-deoxycytidine + H2O + H(+) = 2'-deoxyuridine + NH4(+). Functionally, this enzyme scavenges exogenous and endogenous cytidine and 2'-deoxycytidine for UMP synthesis. The polypeptide is Cytidine deaminase (Shigella dysenteriae serotype 1 (strain Sd197)).